Reading from the N-terminus, the 161-residue chain is Cyclic pyranopterin monophosphate synthase (161 aa).

Substrate-binding positions include 75-77 and 113-114; these read LCH and ME. The active site involves D128.

It belongs to the MoaC family. In terms of assembly, homohexamer; trimer of dimers.

The catalysed reaction is (8S)-3',8-cyclo-7,8-dihydroguanosine 5'-triphosphate = cyclic pyranopterin phosphate + diphosphate. It functions in the pathway cofactor biosynthesis; molybdopterin biosynthesis. Functionally, catalyzes the conversion of (8S)-3',8-cyclo-7,8-dihydroguanosine 5'-triphosphate to cyclic pyranopterin monophosphate (cPMP). The sequence is that of Cyclic pyranopterin monophosphate synthase from Salmonella heidelberg (strain SL476).